Here is a 129-residue protein sequence, read N- to C-terminus: Follitropin subunit beta (129 aa).

The N-terminal stretch at 1–20 (MKSVQLCFLFCCWRAICCKS) is a signal peptide. 6 disulfides stabilise this stretch: Cys-21-Cys-69, Cys-35-Cys-84, Cys-38-Cys-122, Cys-46-Cys-100, Cys-50-Cys-102, and Cys-105-Cys-112. 2 N-linked (GlcNAc...) asparagine glycosylation sites follow: Asn-25 and Asn-42.

This sequence belongs to the glycoprotein hormones subunit beta family. As to quaternary structure, heterodimer. The active follitropin is a heterodimer composed of an alpha chain/CGA shared with other hormones and a unique beta chain/FSHB shown here.

It localises to the secreted. Its function is as follows. Together with the alpha chain CGA constitutes follitropin, the follicle-stimulating hormone, and provides its biological specificity to the hormone heterodimer. Binds FSHR, a G protein-coupled receptor, on target cells to activate downstream signaling pathways. Follitropin is involved in follicle development and spermatogenesis in reproductive organs. The chain is Follitropin subunit beta (FSHB) from Ailuropoda melanoleuca (Giant panda).